A 734-amino-acid chain; its full sequence is Photosystem I P700 chlorophyll a apoprotein A2 (734 aa).

Transmembrane regions (helical) follow at residues 46–69 (IFASHFGQLAIIFLWTSGNLFHVA), 135–158 (LYTGALFLLFLSALSLIAGWLHLQ), 175–199 (LNHHLSGLFGVSSLAWTGHLVHVAI), 273–291 (IAHHHLAIAILFLIAGHMY), 330–353 (IHFQLGLALASLGVITSLVAQHMY), 369–395 (AALYTHHQYIAGFIMTGAFAHGAIFFI), 417–439 (AIISHLSWASLFLGFHTLGLYVH), and 517–535 (FLVHHAIALGLHTTTLILV). Cys559 and Cys568 together coordinate [4Fe-4S] cluster. A run of 2 helical transmembrane segments spans residues 575–596 (AFYLAVFWMLNTIGWVTFYWHW) and 643–665 (LSVWAWMFLFGHLVWATGFMFLI). His654, Met662, and Tyr670 together coordinate chlorophyll a. Trp671 lines the phylloquinone pocket. The chain crosses the membrane as a helical span at residues 707–727 (LVGLAHFSVGYIFTYAAFLIA).

Belongs to the PsaA/PsaB family. As to quaternary structure, the PsaA/B heterodimer binds the P700 chlorophyll special pair and subsequent electron acceptors. PSI consists of a core antenna complex that captures photons, and an electron transfer chain that converts photonic excitation into a charge separation. The eukaryotic PSI reaction center is composed of at least 11 subunits. P700 is a chlorophyll a/chlorophyll a' dimer, A0 is one or more chlorophyll a, A1 is one or both phylloquinones and FX is a shared 4Fe-4S iron-sulfur center. is required as a cofactor.

It is found in the plastid. Its subcellular location is the chloroplast thylakoid membrane. The catalysed reaction is reduced [plastocyanin] + hnu + oxidized [2Fe-2S]-[ferredoxin] = oxidized [plastocyanin] + reduced [2Fe-2S]-[ferredoxin]. PsaA and PsaB bind P700, the primary electron donor of photosystem I (PSI), as well as the electron acceptors A0, A1 and FX. PSI is a plastocyanin-ferredoxin oxidoreductase, converting photonic excitation into a charge separation, which transfers an electron from the donor P700 chlorophyll pair to the spectroscopically characterized acceptors A0, A1, FX, FA and FB in turn. Oxidized P700 is reduced on the lumenal side of the thylakoid membrane by plastocyanin. The sequence is that of Photosystem I P700 chlorophyll a apoprotein A2 from Gossypium hirsutum (Upland cotton).